Consider the following 246-residue polypeptide: 3-deoxy-manno-octulosonate cytidylyltransferase (246 aa).

The protein belongs to the KdsB family.

Its subcellular location is the cytoplasm. The enzyme catalyses 3-deoxy-alpha-D-manno-oct-2-ulosonate + CTP = CMP-3-deoxy-beta-D-manno-octulosonate + diphosphate. It participates in nucleotide-sugar biosynthesis; CMP-3-deoxy-D-manno-octulosonate biosynthesis; CMP-3-deoxy-D-manno-octulosonate from 3-deoxy-D-manno-octulosonate and CTP: step 1/1. Its pathway is bacterial outer membrane biogenesis; lipopolysaccharide biosynthesis. In terms of biological role, activates KDO (a required 8-carbon sugar) for incorporation into bacterial lipopolysaccharide in Gram-negative bacteria. The chain is 3-deoxy-manno-octulosonate cytidylyltransferase from Bradyrhizobium diazoefficiens (strain JCM 10833 / BCRC 13528 / IAM 13628 / NBRC 14792 / USDA 110).